Reading from the N-terminus, the 453-residue chain is MSIVTVQLGQCGNQIGFEVFDALLSDSHSSQGLCCKRENEAYQASCKERFFSEEENGVPIARAVLVDMEPKVINQTLSKAAQSGRWKYGQHACFCQKQGSGNNWAYGYSVHGPRHEESIMDLIRKEVEKCDSFSGFFIIMSMAGGTGSGIGAFVTQNLQDQYSNSLKMNQIIWPYGTGEVIVQNYNSILTLSHLYRSSDALLVHENDAVHKICAKLMNIKQISFSDINQVLAHQLGSVFQPTYSAESSFHYRRNPLGDLMEHLVPHPEFKMLSIRNVPHMSENSLAYSTFTWAGLLKHLRQMLISNAKMEEGIDWHARPPLSGLPSLGKMSLNKDLHFNTSIANLVILRGKDVQSADVEGFKDPALYTSWLEPVNAFNVWKTQRAFSKYEKSAVLVSNSQFLVKPLDMIVRKAWNMFASKAYIHQYTKFGIEEEDFLDSFTSLEQVVASYCNL.

143–149 (AGGTGSG) contacts GTP.

Belongs to the tubulin family. In terms of assembly, found in a complex with TEDC1, TEDC2, TUBE1 and TUBD1.

The protein resides in the nucleus. Its subcellular location is the cytoplasm. It is found in the cytoskeleton. It localises to the microtubule organizing center. The protein localises to the centrosome. The protein resides in the centriole. Its subcellular location is the cell projection. It is found in the cilium. In terms of biological role, acts as a positive regulator of hedgehog signaling and regulates ciliary function. This chain is Tubulin delta chain (TUBD1), found in Macaca fascicularis (Crab-eating macaque).